Consider the following 196-residue polypeptide: Phosphoheptose isomerase (196 aa).

Residues 34–196 (MVQCLLGGKK…DRTLFPQDEA (163 aa)) form the SIS domain. A substrate-binding site is contributed by 49–51 (NGG). Residues His58 and Glu62 each contribute to the Zn(2+) site. Substrate is bound by residues Glu62, 91–92 (ND), 117–119 (STS), Ser122, and Gln172. 2 residues coordinate Zn(2+): Gln172 and His180.

The protein belongs to the SIS family. GmhA subfamily. As to quaternary structure, homotetramer. It depends on Zn(2+) as a cofactor.

It is found in the cytoplasm. It catalyses the reaction 2 D-sedoheptulose 7-phosphate = D-glycero-alpha-D-manno-heptose 7-phosphate + D-glycero-beta-D-manno-heptose 7-phosphate. It functions in the pathway carbohydrate biosynthesis; D-glycero-D-manno-heptose 7-phosphate biosynthesis; D-glycero-alpha-D-manno-heptose 7-phosphate and D-glycero-beta-D-manno-heptose 7-phosphate from sedoheptulose 7-phosphate: step 1/1. Functionally, catalyzes the isomerization of sedoheptulose 7-phosphate in D-glycero-D-manno-heptose 7-phosphate. The sequence is that of Phosphoheptose isomerase from Shewanella denitrificans (strain OS217 / ATCC BAA-1090 / DSM 15013).